We begin with the raw amino-acid sequence, 266 residues long: Zinc transporter ZupT (266 aa).

Transmembrane regions (helical) follow at residues 8 to 28, 35 to 55, 70 to 90, 123 to 143, 152 to 172, 185 to 205, 209 to 229, and 246 to 266; these read LALT…ALMV, FLTF…FVEI, HAAG…IWLI, GIFT…AVFF, GVVI…AVAV, FSYS…GYAL, FLSP…MVYI, and IAIS…LMLA. Residues Asn-134 and Glu-137 each contribute to the Fe(2+) site. Residues Glu-137 and His-162 each contribute to the Zn(2+) site. The Fe(2+) site is built by Asn-163, Glu-166, and Glu-195. Zn(2+) is bound at residue Glu-166.

This sequence belongs to the ZIP transporter (TC 2.A.5) family. ZupT subfamily.

It is found in the cell inner membrane. It carries out the reaction Zn(2+)(in) = Zn(2+)(out). Mediates zinc uptake. May also transport other divalent cations. The sequence is that of Zinc transporter ZupT from Chlorobium limicola (strain DSM 245 / NBRC 103803 / 6330).